Reading from the N-terminus, the 144-residue chain is MTENMIVIYHNPDCGTSRNVLQLIEAAGYLPQVIEYVKEGWTKPQLLGLFAAADLTPRSALRTTKSPAAELNLLEETVTDAQILDAMVEYPILVNRPIVCTPKGVRLCRPSEVVLDLLDHWPSGPFAKEDGELIIDERGNRVYT.

The active-site Nucleophile; cysteine thioarsenate intermediate is Cys14.

The protein belongs to the ArsC family.

It catalyses the reaction [glutaredoxin]-dithiol + arsenate + glutathione + H(+) = glutathionyl-S-S-[glutaredoxin] + arsenite + H2O. Its function is as follows. Catalyzes the reduction of arsenate [As(V)] to arsenite [As(III)]. Does not constitute the major arsenate reductase in cells: essential only in the absence of ArsC (AC P74313). This chain is Arsenate reductase ArsI1, found in Synechocystis sp. (strain ATCC 27184 / PCC 6803 / Kazusa).